The sequence spans 206 residues: Ras-related protein Rab-18 (206 aa).

Met1 is modified (N-acetylmethionine). 11 residues coordinate GTP: Ser17, Gly20, Lys21, Ser22, Ser23, Asp34, Pro35, Thr40, Gly66, Lys123, and Asp125. Ser22 is a binding site for Mg(2+). 2 short sequence motifs (switch) span residues 31–45 (DTFD…GVDF) and 63–80 (DTAG…YYRG). Thr40 provides a ligand contact to Mg(2+). Ser144 is subject to Phosphoserine. Residue Ala152 participates in GTP binding. A lipid anchor (S-palmitoyl cysteine) is attached at Cys199. Cys203 is modified (cysteine methyl ester). The S-geranylgeranyl cysteine moiety is linked to residue Cys203. Residues 204–206 (SVL) constitute a propeptide, removed in mature form.

It belongs to the small GTPase superfamily. Rab family. In terms of assembly, interacts (in GTP-bound form) with ZFYVE1. Interacts with ZW10 and this interaction is enhanced in the presence of ZFYVE1. Interacts with BSCL2. The cofactor is Mg(2+).

Its subcellular location is the endoplasmic reticulum membrane. It is found in the golgi apparatus. The protein resides in the cis-Golgi network membrane. The protein localises to the lipid droplet. It localises to the apical cell membrane. It carries out the reaction GTP + H2O = GDP + phosphate + H(+). Its activity is regulated as follows. Regulated by guanine nucleotide exchange factors (GEFs) which promote the exchange of bound GDP for free GTP. Regulated by GTPase activating proteins (GAPs) which increase the GTP hydrolysis activity at the ER membrane. Inhibited by GDP dissociation inhibitors (GDIs) which prevent Rab-GDP dissociation. Functionally, the small GTPases Rab are key regulators of intracellular membrane trafficking, from the formation of transport vesicles to their fusion with membranes. Rabs cycle between an inactive GDP-bound form and an active GTP-bound form that is able to recruit to membranes different sets of downstream effectors directly responsible for vesicle formation, movement, tethering and fusion. RAB18 is required for the localization of ZFYVE1 to lipid droplets and for its function in mediating the formation of endoplasmic reticulum-lipid droplets (ER-LD) contacts. Also required for maintaining endoplasmic reticulum structure. Plays a role in apical endocytosis/recycling. Plays a key role in eye and brain development and neurodegeneration. The polypeptide is Ras-related protein Rab-18 (RAB18) (Bos taurus (Bovine)).